Here is a 329-residue protein sequence, read N- to C-terminus: Biotin synthase (329 aa).

Residues 46-275 enclose the Radical SAM core domain; it reads YYGNKVKLNM…TKEIRISGGR (230 aa). 3 residues coordinate [4Fe-4S] cluster: Cys-64, Cys-68, and Cys-71. [2Fe-2S] cluster is bound by residues Cys-108, Cys-140, Cys-200, and Arg-270.

The protein belongs to the radical SAM superfamily. Biotin synthase family. As to quaternary structure, homodimer. [4Fe-4S] cluster serves as cofactor. The cofactor is [2Fe-2S] cluster.

The catalysed reaction is (4R,5S)-dethiobiotin + (sulfur carrier)-SH + 2 reduced [2Fe-2S]-[ferredoxin] + 2 S-adenosyl-L-methionine = (sulfur carrier)-H + biotin + 2 5'-deoxyadenosine + 2 L-methionine + 2 oxidized [2Fe-2S]-[ferredoxin]. Its pathway is cofactor biosynthesis; biotin biosynthesis; biotin from 7,8-diaminononanoate: step 2/2. Its function is as follows. Catalyzes the conversion of dethiobiotin (DTB) to biotin by the insertion of a sulfur atom into dethiobiotin via a radical-based mechanism. The sequence is that of Biotin synthase from Anoxybacillus flavithermus (strain DSM 21510 / WK1).